We begin with the raw amino-acid sequence, 388 residues long: MTSSRDALSIAQALLRCPSVTPADAGALGVLETLLKDAGFTAHRVTFSEPGAADIDNLYARIGDGAPHLCFAGHTDVVPPGDADAWSHGAFSGDVEGGLLYGRGAVDMKGGIACAVAAVLDHLAAHGGRPKGSISFLITGDEEDVAVNGTVKLLQWAADRGETFDHCIVGEPSNVEAIGDTIKIGRRGSQSGMLIVDGLQGHVAYPHRASNPIPDIAALITALNDEPLDQGSAQFQPSNLEFTSVDVGNPATNVIPAQARAKFNIRFNDHHTQDSLKALIEQRLAAACGNRIRARIEWLPSNADVFVTKPGNFTDLVTASIADVTGRTPDLNTGGGTSDARFIAKYCPVVEFGLVGQTMHQIDERTPVADLDQLTAIYRGVLERYFKS.

A Zn(2+)-binding site is contributed by H74. D76 is a catalytic residue. D107 contributes to the Zn(2+) binding site. Catalysis depends on E142, which acts as the Proton acceptor. Residues E143, E171, and H360 each contribute to the Zn(2+) site.

This sequence belongs to the peptidase M20A family. DapE subfamily. As to quaternary structure, homodimer. Zn(2+) is required as a cofactor. Requires Co(2+) as cofactor.

It catalyses the reaction N-succinyl-(2S,6S)-2,6-diaminopimelate + H2O = (2S,6S)-2,6-diaminopimelate + succinate. It functions in the pathway amino-acid biosynthesis; L-lysine biosynthesis via DAP pathway; LL-2,6-diaminopimelate from (S)-tetrahydrodipicolinate (succinylase route): step 3/3. Functionally, catalyzes the hydrolysis of N-succinyl-L,L-diaminopimelic acid (SDAP), forming succinate and LL-2,6-diaminopimelate (DAP), an intermediate involved in the bacterial biosynthesis of lysine and meso-diaminopimelic acid, an essential component of bacterial cell walls. This Rhodopseudomonas palustris (strain BisB5) protein is Succinyl-diaminopimelate desuccinylase.